The following is a 221-amino-acid chain: Endonuclease V (221 aa).

Mg(2+) is bound by residues Asp44 and Asp112.

This sequence belongs to the endonuclease V family. Requires Mg(2+) as cofactor.

The protein localises to the cytoplasm. The enzyme catalyses Endonucleolytic cleavage at apurinic or apyrimidinic sites to products with a 5'-phosphate.. In terms of biological role, DNA repair enzyme involved in the repair of deaminated bases. Selectively cleaves double-stranded DNA at the second phosphodiester bond 3' to a deoxyinosine leaving behind the intact lesion on the nicked DNA. The chain is Endonuclease V from Trichormus variabilis (strain ATCC 29413 / PCC 7937) (Anabaena variabilis).